Consider the following 184-residue polypeptide: Peptide deformylase (184 aa).

Fe cation-binding residues include cysteine 111 and histidine 154. The active site involves glutamate 155. A Fe cation-binding site is contributed by histidine 158.

The protein belongs to the polypeptide deformylase family. Requires Fe(2+) as cofactor.

The catalysed reaction is N-terminal N-formyl-L-methionyl-[peptide] + H2O = N-terminal L-methionyl-[peptide] + formate. Its function is as follows. Removes the formyl group from the N-terminal Met of newly synthesized proteins. Requires at least a dipeptide for an efficient rate of reaction. N-terminal L-methionine is a prerequisite for activity but the enzyme has broad specificity at other positions. This chain is Peptide deformylase, found in Lactobacillus gasseri (strain ATCC 33323 / DSM 20243 / BCRC 14619 / CIP 102991 / JCM 1131 / KCTC 3163 / NCIMB 11718 / NCTC 13722 / AM63).